A 393-amino-acid chain; its full sequence is Major outer membrane porin, serovar D (393 aa).

The N-terminal stretch at 1-22 (MKKLLKSVLVFAALSSASSLQA) is a signal peptide.

The protein belongs to the chlamydial porin (CP) (TC 1.B.2) family. Part of a disulfide cross-linked outer membrane complex (COMC) composed of the major outer membrane porin (MOMP), the small cysteine-rich protein (OmcA) and the large cysteine-rich periplasmic protein (OmcB).

Its subcellular location is the cell outer membrane. Functionally, in elementary bodies (EBs, the infectious stage, which is able to survive outside the host cell) provides the structural integrity of the outer envelope through disulfide cross-links with the small cysteine-rich protein and the large cysteine-rich periplasmic protein. It has been described in publications as the Sarkosyl-insoluble COMC (Chlamydia outer membrane complex), and serves as the functional equivalent of peptidoglycan. Permits diffusion of specific solutes through the outer membrane. The chain is Major outer membrane porin, serovar D (ompA) from Chlamydia trachomatis serovar D (strain ATCC VR-885 / DSM 19411 / UW-3/Cx).